The primary structure comprises 868 residues: Probable inorganic carbon transporter subunit DabA (868 aa).

C392, D394, H574, and C589 together coordinate Zn(2+).

It belongs to the inorganic carbon transporter (TC 9.A.2) DabA family. In terms of assembly, forms a complex with DabB. Zn(2+) is required as a cofactor.

It is found in the cell membrane. Part of an energy-coupled inorganic carbon pump. This is Probable inorganic carbon transporter subunit DabA from Bacillus cereus (strain B4264).